The following is a 909-amino-acid chain: Lon protease homolog 2, peroxisomal (909 aa).

One can recognise a Lon N-terminal domain in the interval 1 to 230 (MAPVRAPTAR…KVIELLDRQV (230 aa)). The interval 249–269 (FPMDPDSTKPGKVKPPVKAPG) is disordered. 463–470 (GPPGVGKT) contributes to the ATP binding site. Positions 706-893 (TSRPGIVTGL…WEAIRYVWPD (188 aa)) constitute a Lon proteolytic domain. Active-site residues include Ser-799 and Lys-842. A Microbody targeting signal motif is present at residues 907 to 909 (SRL).

Belongs to the peptidase S16 family.

It localises to the peroxisome matrix. Its subcellular location is the cytoplasm. It carries out the reaction Hydrolysis of proteins in presence of ATP.. In terms of biological role, ATP-dependent serine protease that mediates the selective degradation of misfolded and unassembled polypeptides in the peroxisomal matrix. Necessary for type 2 peroxisome targeting signal (PTS2)-containing protein processing and facilitates peroxisome matrix protein import. The chain is Lon protease homolog 2, peroxisomal from Sordaria macrospora (strain ATCC MYA-333 / DSM 997 / K(L3346) / K-hell).